Here is a 268-residue protein sequence, read N- to C-terminus: Exodeoxyribonuclease III (268 aa).

E34 is a binding site for Mg(2+). The active site involves Y109. Residues D151, N153, and D258 each coordinate Mg(2+). The active-site Proton donor/acceptor is D151.

It belongs to the DNA repair enzymes AP/ExoA family. Monomer. The cofactor is Mg(2+). Mn(2+) is required as a cofactor.

The catalysed reaction is Exonucleolytic cleavage in the 3'- to 5'-direction to yield nucleoside 5'-phosphates.. Its function is as follows. Major apurinic-apyrimidinic endonuclease of E.coli. It removes the damaged DNA at cytosines and guanines by cleaving on the 3'-side of the AP site by a beta-elimination reaction. It exhibits 3'-5'-exonuclease, 3'-phosphomonoesterase, 3'-repair diesterase and ribonuclease H activities. In Salmonella typhi, this protein is Exodeoxyribonuclease III (xthA).